A 220-amino-acid polypeptide reads, in one-letter code: MEEDEFIGEKTFQRYCAEFIKHSQQIGDSWEWRPSKDCSDGYMCKIHFQIKNGSVMSHLGASTHGQTCLPMEEAFELPLDDCEVIETAAASEVIKYEYHVLYSCSYQVPVLYFRASFLDGRPLTLKDIWEGVHECYKMRLLQGPWDTITQQEHPILGQPFFVLHPCKTNEFMTPVLKNSQKINKNVNYITSWLSIVGPVVGLNLPLSYAKATSQDERNVP.

Catalysis depends on Cys-166, which acts as the Glycyl thioester intermediate.

It belongs to the ATG10 family. Interacts with MAP1LC3A. By interacting with MAP1LC3A, it plays a role in the conjugation of ATG12 to ATG5. Also able to directly interact either with ATG5 or ATG7. Interacts with IRGM.

It localises to the cytoplasm. Functionally, E2-like enzyme involved in autophagy. Acts as an E2-like enzyme that catalyzes the conjugation of ATG12 to ATG5. ATG12 conjugation to ATG5 is required for autophagy. Likely serves as an ATG5-recognition molecule. Not involved in ATG12 conjugation to ATG3. Plays a role in adenovirus-mediated cell lysis. This is Ubiquitin-like-conjugating enzyme ATG10 (ATG10) from Homo sapiens (Human).